A 325-amino-acid polypeptide reads, in one-letter code: WUSCHEL-related homeobox 8 (325 aa).

The homeobox; WUS-type DNA-binding region spans Asp51–Leu115.

The protein belongs to the WUS homeobox family. In terms of tissue distribution, expressed only in the egg cell. Not detected in the pollen tube. Expressed in the zygote, the basal cell, and later the suspensor. Expressed in all suspensor cells, except the hypophysis, and in the embryo surrounding region (ESR) endosperm cells. Strongly expressed in the suspensor cells, with a weak expression also detected throughout the developing embryo.

It is found in the nucleus. In terms of biological role, probable transcription factor, which may be involved in embryonic patterning. May be required for basal embryo development after fertilization. Acts partially redundantly with STIP in promoting embryonic cell division and proliferation. Promotes cotyledon boundary formation by maintaining the symmetry in CUC genes expression domains. In Arabidopsis thaliana (Mouse-ear cress), this protein is WUSCHEL-related homeobox 8.